Reading from the N-terminus, the 747-residue chain is Rho GTPase-activating protein 24 (747 aa).

2 disordered regions span residues 1–20 (MEERCESTESPQGQGRKNTK) and 327–475 (FPKD…GTHS). The PH domain occupies 17–123 (KNTKCGWLRK…WVKSIRRVIW (107 aa)). A Rho-GAP domain is found at 133–327 (QKLEDTVRYE…VMISKHDRLF (195 aa)). 2 stretches are compositionally biased toward polar residues: residues 334-346 (QSKPQDGPNSNNN) and 355-367 (GQLQNKENNNTKE). Residues S368, S390, S395, S397, S401, S412, S414, and S436 each carry the phosphoserine modification. Positions 368–380 (SPVRRCSWDKPES) are enriched in basic and acidic residues. Polar residues predominate over residues 381–404 (PQRSSVDNGSPTALSGSKTNSPRN). Residues 431 to 475 (IVTNGSFSSSNAEGVEKPQTTPNGSLQARRTSSLKSSGTKMGTHS) are compositionally biased toward polar residues. The residue at position 451 (T451) is a Phosphothreonine. S494 carries the phosphoserine modification. Residues 581-639 (DFYVGNFEDPVLDGPPQDDLSHPGDYENKSDRRSVGGRSSRATSSSDNSETFVGNTSSN) are disordered. Residues 599–614 (DLSHPGDYENKSDRRS) show a composition bias toward basic and acidic residues. Residues 616–629 (GGRSSRATSSSDNS) are compositionally biased toward low complexity. Over residues 630–639 (ETFVGNTSSN) the composition is skewed to polar residues. The stretch at 648 to 728 (SSLKQEMTKQ…KEMEQFFSTF (81 aa)) forms a coiled coil.

In terms of assembly, interacts with FLNA. In terms of processing, phosphorylated by ROCK, leading to activate the RacGAP activity.

The protein resides in the cytoplasm. It localises to the cytoskeleton. Its subcellular location is the cell junction. It is found in the adherens junction. The protein localises to the focal adhesion. The protein resides in the cell projection. In terms of biological role, rho GTPase-activating protein involved in cell polarity, cell morphology and cytoskeletal organization. Acts as a GTPase activator for the Rac-type GTPase by converting it to an inactive GDP-bound state. Controls actin remodeling by inactivating Rac downstream of Rho leading to suppress leading edge protrusion and promotes cell retraction to achieve cellular polarity. Able to suppress RAC1 and CDC42 activity in vitro. Overexpression induces cell rounding with partial or complete disruption of actin stress fibers and formation of membrane ruffles, lamellipodia, and filopodia. Isoform 2 is a vascular cell-specific GAP involved in modulation of angiogenesis. The polypeptide is Rho GTPase-activating protein 24 (Arhgap24) (Mus musculus (Mouse)).